A 304-amino-acid polypeptide reads, in one-letter code: UDP-3-O-acyl-N-acetylglucosamine deacetylase (304 aa).

Residues histidine 78, histidine 237, and aspartate 241 each contribute to the Zn(2+) site. Catalysis depends on histidine 264, which acts as the Proton donor.

The protein belongs to the LpxC family. Zn(2+) is required as a cofactor.

The enzyme catalyses a UDP-3-O-[(3R)-3-hydroxyacyl]-N-acetyl-alpha-D-glucosamine + H2O = a UDP-3-O-[(3R)-3-hydroxyacyl]-alpha-D-glucosamine + acetate. The protein operates within glycolipid biosynthesis; lipid IV(A) biosynthesis; lipid IV(A) from (3R)-3-hydroxytetradecanoyl-[acyl-carrier-protein] and UDP-N-acetyl-alpha-D-glucosamine: step 2/6. Its function is as follows. Catalyzes the hydrolysis of UDP-3-O-myristoyl-N-acetylglucosamine to form UDP-3-O-myristoylglucosamine and acetate, the committed step in lipid A biosynthesis. This is UDP-3-O-acyl-N-acetylglucosamine deacetylase from Acidithiobacillus ferrooxidans (strain ATCC 53993 / BNL-5-31) (Leptospirillum ferrooxidans (ATCC 53993)).